The chain runs to 123 residues: Large ribosomal subunit protein uL24 (123 aa).

Belongs to the universal ribosomal protein uL24 family. Part of the 50S ribosomal subunit.

Functionally, one of two assembly initiator proteins, it binds directly to the 5'-end of the 23S rRNA, where it nucleates assembly of the 50S subunit. In terms of biological role, one of the proteins that surrounds the polypeptide exit tunnel on the outside of the subunit. This chain is Large ribosomal subunit protein uL24, found in Kineococcus radiotolerans (strain ATCC BAA-149 / DSM 14245 / SRS30216).